A 294-amino-acid chain; its full sequence is 33 kDa chaperonin (294 aa).

2 disulfide bridges follow: cysteine 235/cysteine 237 and cysteine 268/cysteine 271.

This sequence belongs to the HSP33 family. In terms of processing, under oxidizing conditions two disulfide bonds are formed involving the reactive cysteines. Under reducing conditions zinc is bound to the reactive cysteines and the protein is inactive.

It localises to the cytoplasm. Redox regulated molecular chaperone. Protects both thermally unfolding and oxidatively damaged proteins from irreversible aggregation. Plays an important role in the bacterial defense system toward oxidative stress. The protein is 33 kDa chaperonin of Proteus mirabilis (strain HI4320).